We begin with the raw amino-acid sequence, 989 residues long: Phosphoenolpyruvate carboxylase (989 aa).

Catalysis depends on residues histidine 175 and lysine 630.

Belongs to the PEPCase type 1 family. Requires Mg(2+) as cofactor.

It catalyses the reaction oxaloacetate + phosphate = phosphoenolpyruvate + hydrogencarbonate. Functionally, forms oxaloacetate, a four-carbon dicarboxylic acid source for the tricarboxylic acid cycle. This Prochlorococcus marinus (strain AS9601) protein is Phosphoenolpyruvate carboxylase.